A 139-amino-acid polypeptide reads, in one-letter code: Type II methyltransferase M.AquIB (139 aa).

The SAM-dependent MTase C5-type domain occupies 1 to 135; the sequence is MDIKNVHIKN…KAVSEQLLDV (135 aa). A disordered region spans residues 38–58; it reads KTFGSTYRRLDPNQPSPTVTR.

The protein belongs to the class I-like SAM-binding methyltransferase superfamily. C5-methyltransferase family. Heterodimer of an alpha and a beta subunit.

The enzyme catalyses a 2'-deoxycytidine in DNA + S-adenosyl-L-methionine = a 5-methyl-2'-deoxycytidine in DNA + S-adenosyl-L-homocysteine + H(+). Its function is as follows. A methylase, recognizes the double-stranded sequence 5'-CYCGRG-3', methylates C-1 on both strands, and protects the DNA from cleavage by the AquI endonuclease. The protein is Type II methyltransferase M.AquIB (aquIMB) of Picosynechococcus sp. (strain ATCC 27264 / PCC 7002 / PR-6) (Agmenellum quadruplicatum).